We begin with the raw amino-acid sequence, 92 residues long: Long neurotoxin 2 (92 aa).

The first 21 residues, 1-21 (MKTLLLTLVVVTIVCLDLGYT), serve as a signal peptide directing secretion. Disulfide bonds link cysteine 24/cysteine 42, cysteine 35/cysteine 63, cysteine 48/cysteine 52, cysteine 67/cysteine 79, and cysteine 80/cysteine 85.

The protein belongs to the three-finger toxin family. Long-chain subfamily. Type II alpha-neurotoxin sub-subfamily. As to expression, expressed by the venom gland.

It localises to the secreted. In terms of biological role, binds with high affinity to muscular (alpha-1/CHRNA1) and neuronal (alpha-7/CHRNA7) nicotinic acetylcholine receptor (nAChR) and inhibits acetylcholine from binding to the receptor, thereby impairing neuromuscular and neuronal transmission. The protein is Long neurotoxin 2 of Oxyuranus microlepidotus (Inland taipan).